Reading from the N-terminus, the 224-residue chain is Thiamine-phosphate synthase (224 aa).

4-amino-2-methyl-5-(diphosphooxymethyl)pyrimidine-binding positions include 44–48 (QFREK) and asparagine 79. Residues aspartate 80 and aspartate 99 each contribute to the Mg(2+) site. Serine 117 serves as a coordination point for 4-amino-2-methyl-5-(diphosphooxymethyl)pyrimidine. 143–145 (TET) is a binding site for 2-[(2R,5Z)-2-carboxy-4-methylthiazol-5(2H)-ylidene]ethyl phosphate. A 4-amino-2-methyl-5-(diphosphooxymethyl)pyrimidine-binding site is contributed by lysine 146. 2-[(2R,5Z)-2-carboxy-4-methylthiazol-5(2H)-ylidene]ethyl phosphate-binding positions include glycine 175 and 195-196 (IS).

This sequence belongs to the thiamine-phosphate synthase family. The cofactor is Mg(2+).

It catalyses the reaction 2-[(2R,5Z)-2-carboxy-4-methylthiazol-5(2H)-ylidene]ethyl phosphate + 4-amino-2-methyl-5-(diphosphooxymethyl)pyrimidine + 2 H(+) = thiamine phosphate + CO2 + diphosphate. It carries out the reaction 2-(2-carboxy-4-methylthiazol-5-yl)ethyl phosphate + 4-amino-2-methyl-5-(diphosphooxymethyl)pyrimidine + 2 H(+) = thiamine phosphate + CO2 + diphosphate. The enzyme catalyses 4-methyl-5-(2-phosphooxyethyl)-thiazole + 4-amino-2-methyl-5-(diphosphooxymethyl)pyrimidine + H(+) = thiamine phosphate + diphosphate. It functions in the pathway cofactor biosynthesis; thiamine diphosphate biosynthesis; thiamine phosphate from 4-amino-2-methyl-5-diphosphomethylpyrimidine and 4-methyl-5-(2-phosphoethyl)-thiazole: step 1/1. Its function is as follows. Condenses 4-methyl-5-(beta-hydroxyethyl)thiazole monophosphate (THZ-P) and 2-methyl-4-amino-5-hydroxymethyl pyrimidine pyrophosphate (HMP-PP) to form thiamine monophosphate (TMP). The polypeptide is Thiamine-phosphate synthase (Bacillus velezensis (strain DSM 23117 / BGSC 10A6 / LMG 26770 / FZB42) (Bacillus amyloliquefaciens subsp. plantarum)).